The following is a 200-amino-acid chain: Recombination protein RecR (200 aa).

The segment at 60–75 (CVYCQALTEDDVCNIC) adopts a C4-type zinc-finger fold. The Toprim domain maps to 83–177 (TKLCIIESML…KISRIGFGVP (95 aa)).

It belongs to the RecR family.

Its function is as follows. May play a role in DNA repair. It seems to be involved in an RecBC-independent recombinational process of DNA repair. It may act with RecF and RecO. The polypeptide is Recombination protein RecR (Francisella tularensis subsp. novicida (strain U112)).